Reading from the N-terminus, the 563-residue chain is Rab escort protein 1 (563 aa).

A disordered region spans residues 538 to 563; it reads ELFKEETSPAENTTEEENDGGVEIED. The span at 550 to 563 shows a compositional bias: acidic residues; the sequence is TTEEENDGGVEIED.

Belongs to the Rab GDI family. In terms of assembly, heterotrimer composed of the alpha subunit RGTA, the beta subunit RGTB and REP; within this trimer, RGTA and RGTB form the catalytic component, while REP mediates peptide substrate binding. In terms of tissue distribution, expressed in roots, leaves and flowers.

It localises to the cytoplasm. Functionally, substrate-binding subunit of the Rab geranylgeranyltransferase (GGTase) complex. Binds unprenylated Rab proteins and presents the substrate peptide to the catalytic component composed of the alpha subunit RGTA and the beta subunit RGTB. Preferentially binds the GDP-bound form of Rab and stimulates geranylgeranylation of various Rab GTPases in vitro. This Arabidopsis thaliana (Mouse-ear cress) protein is Rab escort protein 1.